The sequence spans 260 residues: uncharacterized protein (260 aa).

This is an uncharacterized protein from Aquifex aeolicus (strain VF5).